A 335-amino-acid chain; its full sequence is MHLRTLHFLILIGIFIGGQTLGCMKKVCGNNAKNDFRRCPDTDGSCGNYHTERTSGEIIDGVDVRCHLGEPIYAPIEGEMYFWRPYGGKREKSCADQGVRIEGTGQWQGYAVHISSVKLSFFGGHVEAGDEIGEALNRYCFNDRGQNDVEPHVEIRLYKEGRLIDPTHHLQNCMCTGQICESNTRNVLLGDPFKTDKRYNGVRGWDVECQMIDDDDEDSPRAPMIYSPIAGEIVGRIRLFTDSNGAYTGCDNDGIFIVGIDDWLGFEARLYNVKARADIGFGRKRIIQGEPIATRLACENSPDSVFVEIRFEGRVVNITDIITAANCKTPNFPVF.

A signal peptide spans 1-20 (MHLRTLHFLILIGIFIGGQT). Cystine bridges form between Cys-28/Cys-66 and Cys-39/Cys-46. Residue Asp-63 coordinates Zn(2+). A glycan (N-linked (GlcNAc...) asparagine) is linked at Asn-317.

Belongs to the LECT2/MIM-1 family. In terms of assembly, component of a multi-protein dma-1 receptor-ligand complex, which is activated upon binding of lect-2, mnr-1 and sax-7 ligands to promote the morphogenesis of dendrites which extend from the PVD neuronal body. Within the complex interacts with sax-7; the interaction is required for lect-2 dendritic localization and enhances the binding of the mnr-1 and sax-7 ligands to the dma-1 receptor-ligand complex. Expressed in body wall muscle cells, along the boundary of the lateral hypodermis, seam cells, processes of the nervous system including commissures, sensory dendrites in the head, and lateral nerve tracts, and motor neurons and some mechanosensory neurons such as ALM.

The protein localises to the secreted. It localises to the cell junction. It is found in the extracellular space. The protein resides in the extracellular matrix. Its subcellular location is the basement membrane. The protein localises to the cell projection. It localises to the dendrite. It is found in the perikaryon. The protein resides in the cell surface. Its function is as follows. Muscle-derived dendritic guidance cue, which is required for the formation of somatosensory dendritic arbors which extend from PVD and FLP sensory neurons during development. Ligand of a multi-protein dma-1 receptor-ligand complex, which is activated upon binding of lect-2, mnr-1 and sax-7 ligands to control the growth of dendrites that extend anteriorly from the PVD neuronal cell body. Enhances the binding of the mnr-1 and sax-7 ligands to the dma-1 receptor-ligand complex. Restricts the growth of secondary PVD dendritic branches and any irregularly positioned ectopic tertiary dendritic branches that originate from secondary branches, and promotes the formation of stable higher order dendritic branches. In particular, it is required for the formation of quaternary PVD dendritic branches and promotes their innervation of body wall muscles. Promotes self-avoidance of tertiary dendritic branches of PVD sensory neurons. Not required for the growth of dendrites that extend from AIY and PVQ interneurons, DVB GABergic neurons, PLM and ALM mechanosensory neurons, AFD sensory neurons and DD/VD and DA/DB motor neurons. This is Leukocyte cell-derived chemotaxin-2 homolog from Caenorhabditis elegans.